The sequence spans 206 residues: Ribosomal RNA large subunit methyltransferase E (206 aa).

The S-adenosyl-L-methionine site is built by G60, W62, D80, D96, and D121. The Proton acceptor role is filled by K161.

The protein belongs to the class I-like SAM-binding methyltransferase superfamily. RNA methyltransferase RlmE family.

It localises to the cytoplasm. The enzyme catalyses uridine(2552) in 23S rRNA + S-adenosyl-L-methionine = 2'-O-methyluridine(2552) in 23S rRNA + S-adenosyl-L-homocysteine + H(+). Specifically methylates the uridine in position 2552 of 23S rRNA at the 2'-O position of the ribose in the fully assembled 50S ribosomal subunit. The polypeptide is Ribosomal RNA large subunit methyltransferase E (Stutzerimonas stutzeri (strain A1501) (Pseudomonas stutzeri)).